A 431-amino-acid chain; its full sequence is Glutamate-1-semialdehyde 2,1-aminomutase (431 aa).

Position 269 is an N6-(pyridoxal phosphate)lysine (lysine 269).

Belongs to the class-III pyridoxal-phosphate-dependent aminotransferase family. HemL subfamily. As to quaternary structure, homodimer. Pyridoxal 5'-phosphate serves as cofactor.

It localises to the cytoplasm. It catalyses the reaction (S)-4-amino-5-oxopentanoate = 5-aminolevulinate. It functions in the pathway porphyrin-containing compound metabolism; protoporphyrin-IX biosynthesis; 5-aminolevulinate from L-glutamyl-tRNA(Glu): step 2/2. This chain is Glutamate-1-semialdehyde 2,1-aminomutase, found in Francisella tularensis subsp. holarctica (strain LVS).